Here is a 172-residue protein sequence, read N- to C-terminus: Small t antigen (172 aa).

Residue methionine 1 is modified to N-acetylmethionine; by host. One can recognise a J domain in the interval 12 to 75; it reads ELMDLLGLER…VKVAHQPDFG (64 aa). Residues 101 to 114 form a C4-type; atypical zinc finger; sequence CATKPSAHCPCMLC. An H1C3-type; atypical zinc finger spans residues 120–141; sequence HVYRKFLRRDPLVWIDCYCFDC.

Interacts with host PPP2R1A; the interaction inhibits PP2A activity.

It is found in the host cytoplasm. Its subcellular location is the host nucleus. Promotes efficient viral genome replication by accelerating both G1 and S phase progression of the cell cycle. Inhibits host PP2A by binding to the A subunit, thereby displacing lower affinity regulatory B subunit. Inactivation of PP2A in turn results in the transactivation of cyclin A and cyclin D1 promoters. Late during the infection cycle, ST may induce dephosphorylation of host MTOR, leading to the inhibition of cap-dependent translation. May establish and maintain high levels of viral genomes during persistent infection in cell culture. This chain is Small t antigen, found in Simian virus 12 (strain wt100) (SV-12).